Consider the following 405-residue polypeptide: Acetate kinase (405 aa).

Asparagine 7 serves as a coordination point for Mg(2+). Lysine 14 is a binding site for ATP. Arginine 90 contributes to the substrate binding site. Aspartate 147 (proton donor/acceptor) is an active-site residue. ATP contacts are provided by residues 207–211 (HLGNG), 282–284 (DFR), and 331–335 (GVGEN). Glutamate 384 contacts Mg(2+).

It belongs to the acetokinase family. Homodimer. Requires Mg(2+) as cofactor. Mn(2+) serves as cofactor.

Its subcellular location is the cytoplasm. It carries out the reaction acetate + ATP = acetyl phosphate + ADP. It participates in metabolic intermediate biosynthesis; acetyl-CoA biosynthesis; acetyl-CoA from acetate: step 1/2. Functionally, catalyzes the formation of acetyl phosphate from acetate and ATP. Can also catalyze the reverse reaction. The protein is Acetate kinase of Clostridium kluyveri (strain ATCC 8527 / DSM 555 / NBRC 12016 / NCIMB 10680 / K1).